The sequence spans 305 residues: tRNA pseudouridine synthase B (305 aa).

Asp-41 (nucleophile) is an active-site residue.

Belongs to the pseudouridine synthase TruB family. Type 1 subfamily.

The catalysed reaction is uridine(55) in tRNA = pseudouridine(55) in tRNA. Its function is as follows. Responsible for synthesis of pseudouridine from uracil-55 in the psi GC loop of transfer RNAs. The polypeptide is tRNA pseudouridine synthase B (Prochlorococcus marinus (strain MIT 9515)).